Here is a 1211-residue protein sequence, read N- to C-terminus: A disintegrin and metalloproteinase with thrombospondin motifs 2 (1211 aa).

An N-terminal signal peptide occupies residues 1–29 (MDPPAGAARRLLCPALLLLLLLLPPPLLP). The propeptide occupies 30–253 (PPPPPANARL…GVLEEHANSS (224 aa)). N-linked (GlcNAc...) asparagine glycosylation is found at N112 and N251. The region spanning 266–470 (YNIEVLLGVD…HSYDCLLDDP (205 aa)) is the Peptidase M12B domain. Disulfide bonds link C343/C392, C386/C465, C425/C451, C492/C517, C503/C526, C512/C545, C539/C550, C573/C610, C577/C615, and C588/C600. H408 is a Zn(2+) binding site. The active site involves E409. Zn(2+) contacts are provided by H412 and H418. The Disintegrin domain occupies 480 to 560 (QLPGLHYSMN…IWLTPDILKR (81 aa)). The region spanning 561–616 (DGSWGAWSPFGSCSRTCGTGVKFRTRQCDNPHPANGGRTCSGLAYDFQLCSRQDCP) is the TSP type-1 1 domain. Residues 691-693 (RGD) carry the Cell attachment site motif. The spacer stretch occupies residues 723-851 (KVVKGTFTRS…NVDDNNVLEE (129 aa)). TSP type-1 domains lie at 854 to 912 (VVYE…NPQE), 914 to 971 (SQPV…RACS), and 975 to 1029 (CPGR…GPCP). N-linked (GlcNAc...) asparagine glycosylation is found at N949 and N993. 3 disulfide bridges follow: C987–C1023, C991–C1028, and C1002–C1012. A glycan (N-linked (GlcNAc...) asparagine) is linked at N1031. A PLAC domain is found at 1059–1097 (SKGHCQGDKSIFCRMEVLSRYCSIPGYNKLCCKSCNLYN). N-linked (GlcNAc...) asparagine glycosylation is found at N1098, N1145, and N1150. The tract at residues 1170–1191 (LEDEVQPPNLIPRRPSPYEKTR) is disordered.

As to quaternary structure, may belong to a multimeric complex. Binds specifically to collagen type XIV. Zn(2+) is required as a cofactor. Post-translationally, the precursor is cleaved by a furin endopeptidase. Glycosylated. Can be O-fucosylated by POFUT2 on a serine or a threonine residue found within the consensus sequence C1-X(2)-(S/T)-C2-G of the TSP type-1 repeat domains where C1 and C2 are the first and second cysteine residue of the repeat, respectively. Fucosylated repeats can then be further glycosylated by the addition of a beta-1,3-glucose residue by the glucosyltransferase, B3GALTL. Fucosylation mediates the efficient secretion of ADAMTS family members. Can also be C-glycosylated with one or two mannose molecules on tryptophan residues within the consensus sequence W-X-X-W of the TPRs, and N-glycosylated. These other glycosylations can also facilitate secretion. In terms of tissue distribution, expressed at high level in skin, bone, tendon and aorta and at low levels in thymus and brain.

The protein localises to the secreted. Its subcellular location is the extracellular space. It localises to the extracellular matrix. The catalysed reaction is Cleaves the N-propeptide of collagen chain alpha1(I) at Pro-|-Gln and of alpha1(II) and alpha2(I) at Ala-|-Gln.. Functionally, cleaves the propeptides of type I and II collagen prior to fibril assembly. Does not act on type III collagen. Cleaves lysyl oxidase LOX at a site downstream of its propeptide cleavage site to produce a short LOX form with reduced collagen-binding activity. The protein is A disintegrin and metalloproteinase with thrombospondin motifs 2 (ADAMTS2) of Homo sapiens (Human).